The sequence spans 118 residues: Small ribosomal subunit protein uS13 (118 aa).

Residues 94–118 are disordered; it reads SLPLRGQRTKTNARTRKGPRKPIRK.

The protein belongs to the universal ribosomal protein uS13 family. In terms of assembly, part of the 30S ribosomal subunit. Forms a loose heterodimer with protein S19. Forms two bridges to the 50S subunit in the 70S ribosome.

Its function is as follows. Located at the top of the head of the 30S subunit, it contacts several helices of the 16S rRNA. In the 70S ribosome it contacts the 23S rRNA (bridge B1a) and protein L5 of the 50S subunit (bridge B1b), connecting the 2 subunits; these bridges are implicated in subunit movement. Contacts the tRNAs in the A and P-sites. The chain is Small ribosomal subunit protein uS13 from Shewanella frigidimarina (strain NCIMB 400).